The primary structure comprises 105 residues: 5-hydroxymethyl-dUMP N-hydrolase (105 aa).

5-hydroxymethyl-dUMP contacts are provided by Gly-6, Ile-8, Ser-42, Gly-44, Glu-48, and Ser-72.

Belongs to the 2'-deoxynucleoside 5'-phosphate N-hydrolase 1 family. Monomer and homodimer.

The protein resides in the cytoplasm. It localises to the nucleus. The catalysed reaction is 5-hydroxymethyl-dUMP + H2O = 5-hydroxymethyluracil + 2-deoxy-D-ribose 5-phosphate. Part of a nucleotide salvage pathway that eliminates epigenetically modified 5-hydroxymethyl-dCMP (hmdCMP) in a two-step process entailing deamination to cytotoxic 5-hydroxymethyl-dUMP (hmdUMP), followed by its hydrolysis into 5-hydroxymethyluracil (hmU) and 2-deoxy-D-ribose 5-phosphate (deoxyribosephosphate). Catalyzes the second step in that pathway, the hydrolysis of the N-glycosidic bond in hmdUMP, degrading this cytotoxic nucleotide to avoid its genomic integration. This is 5-hydroxymethyl-dUMP N-hydrolase from Branchiostoma floridae (Florida lancelet).